The sequence spans 747 residues: Mitochondrial inner membrane i-AAA protease supercomplex subunit YME1 (747 aa).

Positions 51–64 (KNSGEMPPKKEADS) are enriched in basic and acidic residues. Residues 51–92 (KNSGEMPPKKEADSSGKASNKSTISSIDNSQPPPPSNTNDKT) are disordered. A compositionally biased stretch (polar residues) spans 66–80 (GKASNKSTISSIDNS). Position 321-328 (321-328 (GPPGTGKT)) interacts with ATP. His540 lines the Zn(2+) pocket. Glu541 is a catalytic residue. Zn(2+) is bound by residues His544 and Asp618. The interval 718-747 (STNTVVEGPDSDERKDIGDDKPKIPTMLNA) is disordered. Residues 728–740 (SDERKDIGDDKPK) show a composition bias toward basic and acidic residues.

The protein in the N-terminal section; belongs to the AAA ATPase family. This sequence in the C-terminal section; belongs to the peptidase M41 family. Component of the mitochondrial inner membrane i-AAA protease supercomplex composed of MGR1, MGR3 and YME1. Interacts directly with MGR1. Requires Zn(2+) as cofactor.

The protein resides in the mitochondrion inner membrane. Catalytic subunit of the mitochondrial inner membrane i-AAA protease supercomplex required for mitochondrial inner membrane protein turnover. The protease is probably ATP-dependent. Important to maintain the integrity of the mitochondrial compartment. Required both for the degradation of unassembled subunit 2 of cytochrome c oxidase (COX2) and for efficient assembly of mitochondrial respiratory chain. Binds unfolded substrates in an ATPase-independent manner; binding of folded COX2, a physiological substrate, requires an active ATPase but when COX2 is destabilized an active ATPase is no longer necessary. May process ATG32. The polypeptide is Mitochondrial inner membrane i-AAA protease supercomplex subunit YME1 (YME1) (Saccharomyces cerevisiae (strain ATCC 204508 / S288c) (Baker's yeast)).